We begin with the raw amino-acid sequence, 63 residues long: MRYTFGIVTVYLLAGCAGSPPKPPEVKGKYRPINRVEAPASAGRNPVNSLNALCGNLNEKQCR.

An N-terminal signal peptide occupies residues 1-15 (MRYTFGIVTVYLLAG). Residue Cys-16 is the site of N-palmitoyl cysteine attachment. Cys-16 carries the S-diacylglycerol cysteine lipid modification.

This sequence to B.suis ORF12 in VirB region.

Its subcellular location is the cell inner membrane. In Xylella fastidiosa (strain 9a5c), this protein is Putative conjugal transfer lipoprotein XF_a0011.1.